Consider the following 728-residue polypeptide: Catalase-peroxidase 1 (728 aa).

Positions 1–16 (MDKAQHTQGKCPVAHG) are cleaved as a signal peptide. Positions 97-225 (WHSAGTYRMA…LAAVMMGLIY (129 aa)) form a cross-link, tryptophyl-tyrosyl-methioninium (Trp-Tyr) (with M-251). H98 functions as the Proton acceptor in the catalytic mechanism. The tryptophyl-tyrosyl-methioninium (Tyr-Met) (with W-97) cross-link spans 225 to 251 (YVNPEGVDGQPDPLKTAQDIRVTFERM). H266 is a binding site for heme b.

The protein belongs to the peroxidase family. Peroxidase/catalase subfamily. In terms of assembly, homodimer or homotetramer. Requires heme b as cofactor. Formation of the three residue Trp-Tyr-Met cross-link is important for the catalase, but not the peroxidase activity of the enzyme.

It catalyses the reaction H2O2 + AH2 = A + 2 H2O. The enzyme catalyses 2 H2O2 = O2 + 2 H2O. Bifunctional enzyme with both catalase and broad-spectrum peroxidase activity. The sequence is that of Catalase-peroxidase 1 from Shewanella frigidimarina (strain NCIMB 400).